A 265-amino-acid polypeptide reads, in one-letter code: tRNA pseudouridine synthase A (265 aa).

Asp-58 serves as the catalytic Nucleophile. Tyr-116 serves as a coordination point for substrate.

This sequence belongs to the tRNA pseudouridine synthase TruA family. In terms of assembly, homodimer.

The enzyme catalyses uridine(38/39/40) in tRNA = pseudouridine(38/39/40) in tRNA. Its function is as follows. Formation of pseudouridine at positions 38, 39 and 40 in the anticodon stem and loop of transfer RNAs. This is tRNA pseudouridine synthase A from Neisseria gonorrhoeae (strain NCCP11945).